The primary structure comprises 110 residues: UPF0122 protein SPG_1182 (110 aa).

The protein belongs to the UPF0122 family.

Its function is as follows. Might take part in the signal recognition particle (SRP) pathway. This is inferred from the conservation of its genetic proximity to ftsY/ffh. May be a regulatory protein. The chain is UPF0122 protein SPG_1182 from Streptococcus pneumoniae serotype 19F (strain G54).